We begin with the raw amino-acid sequence, 357 residues long: Sorbitol dehydrogenase (357 aa).

A2 is modified (N-acetylalanine). Residue C45 participates in Zn(2+) binding. Position 51 (Y51) interacts with substrate. H70, E71, and E156 together coordinate Zn(2+). Residue E156 participates in substrate binding. The residue at position 169 (S169) is a Phosphoserine. NAD(+)-binding positions include I184, D204, R209, 273–275, and 297–299; these read VGM and VFR. Positions 299 and 300 each coordinate substrate.

It belongs to the zinc-containing alcohol dehydrogenase family. Homotetramer; dimer of dimers. Zn(2+) serves as cofactor. As to expression, expressed in liver and testis.

It localises to the mitochondrion membrane. The protein resides in the cell projection. It is found in the cilium. Its subcellular location is the flagellum. It catalyses the reaction keto-D-fructose + NADH + H(+) = D-sorbitol + NAD(+). It carries out the reaction xylitol + NAD(+) = D-xylulose + NADH + H(+). The enzyme catalyses L-iditol + NAD(+) = keto-L-sorbose + NADH + H(+). In terms of biological role, polyol dehydrogenase that catalyzes the reversible NAD(+)-dependent oxidation of various sugar alcohols. Is active with D-sorbitol (D-glucitol) leading to the C2-oxidized product D-fructose. Is a key enzyme in the polyol pathway that interconverts glucose and fructose via sorbitol, which constitutes an important alternate route for glucose metabolism. May play a role in sperm motility by using sorbitol as an alternative energy source for sperm motility. This chain is Sorbitol dehydrogenase (Sord), found in Rattus norvegicus (Rat).